Reading from the N-terminus, the 289-residue chain is Serine/threonine-protein phosphatase Pgam5, mitochondrial (289 aa).

A helical membrane pass occupies residues 7 to 23; the sequence is FACGTGAGLLTFYLTKL.

It belongs to the phosphoglycerate mutase family. BPG-dependent PGAM subfamily. In terms of assembly, interacts with Pk92B/ASK1.

It is found in the mitochondrion outer membrane. It carries out the reaction O-phospho-L-seryl-[protein] + H2O = L-seryl-[protein] + phosphate. The catalysed reaction is O-phospho-L-threonyl-[protein] + H2O = L-threonyl-[protein] + phosphate. In terms of biological role, displays phosphatase activity for serine/threonine residues, and dephosphorylates and activates Pk92B kinase. Has apparently no phosphoglycerate mutase activity. The protein is Serine/threonine-protein phosphatase Pgam5, mitochondrial of Drosophila persimilis (Fruit fly).